The chain runs to 421 residues: Expansin-like protein DDB_G0293186 (421 aa).

A signal peptide spans 1 to 20; it reads MRTLKLIILLILSTFKTINS. Residue asparagine 19 is glycosylated (N-linked (GlcNAc...) asparagine). Residues 43–139 enclose the Expansin-like EG45 domain; it reads GGQCGLPLPG…QKVSCGFSGY (97 aa). Disulfide bonds link cysteine 46-cysteine 70 and cysteine 73-cysteine 134. Residues asparagine 117 and asparagine 391 are each glycosylated (N-linked (GlcNAc...) asparagine).

It belongs to the expansin family. Expansin A subfamily.

The protein resides in the secreted. May serve to lubricate the movement of the cellulose microfibrils during cell growth and wall extension and/or may serve to maintain the fluid state of the slug cell wall. This Dictyostelium discoideum (Social amoeba) protein is Expansin-like protein DDB_G0293186.